A 371-amino-acid polypeptide reads, in one-letter code: Ferrochelatase (371 aa).

Residues His-218 and Glu-299 each coordinate Fe cation.

Belongs to the ferrochelatase family.

It is found in the cytoplasm. The catalysed reaction is heme b + 2 H(+) = protoporphyrin IX + Fe(2+). The protein operates within porphyrin-containing compound metabolism; protoheme biosynthesis; protoheme from protoporphyrin-IX: step 1/1. Catalyzes the ferrous insertion into protoporphyrin IX. The polypeptide is Ferrochelatase (Cupriavidus taiwanensis (strain DSM 17343 / BCRC 17206 / CCUG 44338 / CIP 107171 / LMG 19424 / R1) (Ralstonia taiwanensis (strain LMG 19424))).